A 206-amino-acid chain; its full sequence is Regulator of rDNA transcription protein 14 (206 aa).

The disordered stretch occupies residues 178–206; it reads FVKDHRYPGLTPGLAPVGLSDEEDSSEED. Phosphoserine is present on residues Ser-197, Ser-202, and Ser-203. Acidic residues predominate over residues 197–206; sequence SDEEDSSEED.

The protein belongs to the RRT14 family.

It is found in the nucleus. It localises to the nucleolus. Involved in ribosome biogenesis, probably through modulation of rDNA transcription. The chain is Regulator of rDNA transcription protein 14 (RRT14) from Saccharomyces cerevisiae (strain ATCC 204508 / S288c) (Baker's yeast).